Here is a 41-residue protein sequence, read N- to C-terminus: Photosystem II reaction center protein J (41 aa).

A helical membrane pass occupies residues 9–29; it reads IPLWFVGMVGGLAALGLLAIF.

The protein belongs to the PsbJ family. In terms of assembly, PSII is composed of 1 copy each of membrane proteins PsbA, PsbB, PsbC, PsbD, PsbE, PsbF, PsbH, PsbI, PsbJ, PsbK, PsbL, PsbM, PsbT, PsbX, PsbY, PsbZ, Psb30/Ycf12, at least 3 peripheral proteins of the oxygen-evolving complex and a large number of cofactors. It forms dimeric complexes.

It localises to the plastid. It is found in the chloroplast thylakoid membrane. In terms of biological role, one of the components of the core complex of photosystem II (PSII). PSII is a light-driven water:plastoquinone oxidoreductase that uses light energy to abstract electrons from H(2)O, generating O(2) and a proton gradient subsequently used for ATP formation. It consists of a core antenna complex that captures photons, and an electron transfer chain that converts photonic excitation into a charge separation. This chain is Photosystem II reaction center protein J, found in Ostreococcus tauri.